An 825-amino-acid polypeptide reads, in one-letter code: Leucine-rich repeat and guanylate kinase domain-containing protein (825 aa).

The segment at D73–L96 is disordered. 9 LRR repeats span residues Y129–V149, H150–P171, Y172–K193, N194–H215, A216–N237, N238–P259, I260–K280, A281–D302, and L303–K324. In terms of domain architecture, LRRCT spans N337–K375. Residues Y414–R597 enclose the Guanylate kinase-like domain. G421–R428 serves as a coordination point for ATP. The interval P760 to R825 is disordered. The span at S763–D774 shows a compositional bias: polar residues. Residues T816–R825 are compositionally biased toward pro residues.

Interacts (via guanylate kinase-like domain) with RIMBP3 (via coiled-coil region). Interacts (via guanylate kinase-like domain) with HOOK2. Interacts (via LRRCT domain) with KLC3. Interacts with HOOK1 and HOOK3.

The protein localises to the cytoplasmic vesicle. It is found in the secretory vesicle. It localises to the acrosome. The protein resides in the cytoplasm. Its subcellular location is the cytoskeleton. The protein localises to the cilium basal body. Functionally, involved in multiple aspects of sperm assembly including acrosome attachment, shaping of the sperm head and in the early aspects of axoneme development. Not essential for primary cilium biogenesis. The polypeptide is Leucine-rich repeat and guanylate kinase domain-containing protein (LRGUK) (Homo sapiens (Human)).